A 241-amino-acid polypeptide reads, in one-letter code: Chloride intracellular channel protein 1 (241 aa).

A2 is subject to N-acetylalanine. The tract at residues 2-90 is required for insertion into the membrane; sequence AEEQPQVELF…EEFLEAVLCP (89 aa). An N6-acetyllysine modification is found at K13. The G-site signature appears at 24-27; it reads CPFS. C24 and C59 are oxidised to a cystine. Residues 26–46 form a helical membrane-spanning segment; the sequence is FSQRLFMVLWLKGVTFNVTTV. The GST C-terminal domain maps to 93 to 233; that stretch reads YPKLAALNPE…PDDEEIELAY (141 aa). Residue K119 is modified to N6-acetyllysine. S121 bears the Phosphoserine mark. K131 bears the N6-acetyllysine mark. S156 bears the Phosphoserine mark. At Y233 the chain carries Phosphotyrosine.

This sequence belongs to the chloride channel CLIC family. As to quaternary structure, monomer. Homodimer (in vitro). Interacts with TRAPPC2. Dimerization requires a conformation change that leads to the exposure of a large hydrophobic surface. In vivo, this may lead to membrane insertion.

It is found in the nucleus. The protein resides in the nucleus membrane. It localises to the cytoplasm. Its subcellular location is the cell membrane. The protein localises to the endoplasmic reticulum. The enzyme catalyses L-dehydroascorbate + 2 glutathione = glutathione disulfide + L-ascorbate. It catalyses the reaction chloride(in) = chloride(out). It carries out the reaction iodide(out) = iodide(in). The catalysed reaction is thiocyanate(in) = thiocyanate(out). The enzyme catalyses nitrate(in) = nitrate(out). It catalyses the reaction bromide(in) = bromide(out). It carries out the reaction fluoride(in) = fluoride(out). In the soluble state, catalyzes glutaredoxin-like thiol disulfide exchange reactions with reduced glutathione as electron donor. Reduces selenite and dehydroascorbate and may act as an antioxidant during oxidative stress response. Can insert into membranes and form voltage-dependent multi-ion conductive channels. Membrane insertion seems to be redox-regulated and may occur only under oxidizing conditions. Involved in regulation of the cell cycle. This chain is Chloride intracellular channel protein 1 (CLIC1), found in Bos taurus (Bovine).